The sequence spans 118 residues: Protein TusC (118 aa).

It belongs to the DsrF/TusC family. Heterohexamer, formed by a dimer of trimers. The hexameric TusBCD complex contains 2 copies each of TusB, TusC and TusD. The TusBCD complex interacts with TusE.

The protein resides in the cytoplasm. Its function is as follows. Part of a sulfur-relay system required for 2-thiolation of 5-methylaminomethyl-2-thiouridine (mnm(5)s(2)U) at tRNA wobble positions. In Salmonella paratyphi C (strain RKS4594), this protein is Protein TusC.